The following is a 256-amino-acid chain: Small ribosomal subunit protein uS3 (256 aa).

The KH type-2 domain maps to 39–111; it reads IREFLNENFS…EVILNIIEVR (73 aa). Residues 219–256 are disordered; the sequence is DTRKPFEAGNQKRGQKRRPRNDQPGQRPQQRNRNSKED. A compositionally biased stretch (low complexity) spans 240-250; that stretch reads DQPGQRPQQRN.

The protein belongs to the universal ribosomal protein uS3 family. Part of the 30S ribosomal subunit. Forms a tight complex with proteins S10 and S14.

Its function is as follows. Binds the lower part of the 30S subunit head. Binds mRNA in the 70S ribosome, positioning it for translation. This chain is Small ribosomal subunit protein uS3, found in Acholeplasma laidlawii (strain PG-8A).